Reading from the N-terminus, the 88-residue chain is Class II hydrophobin 5 (88 aa).

The first 14 residues, 1–14 (MQFLVLALASLAAA), serve as a signal peptide directing secretion. 4 disulfides stabilise this stretch: C27-C73, C35-C64, C36-C48, and C74-C85.

The protein belongs to the cerato-ulmin hydrophobin family. As to quaternary structure, homotetramer. Further self-assembles to form highly ordered films at water-air interfaces through intermolecular interactions. In terms of tissue distribution, only appears on young aerial hyphae. HCf-5 is the most abundant transcript in sporulating mycelium.

The protein resides in the secreted. It is found in the cell wall. In terms of biological role, aerial growth, conidiation, and dispersal of filamentous fungi in the environment rely upon a capability of their secreting small amphipathic proteins called hydrophobins (HPBs) with low sequence identity. Class I can self-assemble into an outermost layer of rodlet bundles on aerial cell surfaces, conferring cellular hydrophobicity that supports fungal growth, development and dispersal; whereas Class II form highly ordered films at water-air interfaces through intermolecular interactions but contribute nothing to the rodlet structure. The protein is Class II hydrophobin 5 of Passalora fulva (Tomato leaf mold).